Reading from the N-terminus, the 60-residue chain is Conotoxin Pu5.6 (60 aa).

The signal sequence occupies residues 1-19 (MRCVPVFVILLLLIASAAS). The propeptide occupies 20-47 (IDAQQKTKDDAPLTSLNDNALQQHWNKR).

Belongs to the conotoxin T superfamily. In terms of processing, contains 2 disulfide bonds that can be either 'C1-C3, C2-C4' or 'C1-C4, C2-C3', since these disulfide connectivities have been observed for conotoxins with cysteine framework V (for examples, see AC P0DQQ7 and AC P81755). In terms of tissue distribution, expressed by the venom duct.

It is found in the secreted. The polypeptide is Conotoxin Pu5.6 (Conus pulicarius (Flea-bitten cone)).